The primary structure comprises 506 residues: Maturase K (506 aa).

Belongs to the intron maturase 2 family. MatK subfamily.

The protein localises to the plastid. It localises to the chloroplast. Functionally, usually encoded in the trnK tRNA gene intron. Probably assists in splicing its own and other chloroplast group II introns. This Carica papaya (Papaya) protein is Maturase K.